Reading from the N-terminus, the 124-residue chain is UPF0482 protein YPK_1977 (124 aa).

The first 32 residues, 1–32, serve as a signal peptide directing secretion; the sequence is MMKINNLPRLIRAFLPATLLMLPLVWQTPALA. The disordered stretch occupies residues 47–69; sequence GGNNDPMSKEQARQSQQQWDETN.

It belongs to the UPF0482 family.

This Yersinia pseudotuberculosis serotype O:3 (strain YPIII) protein is UPF0482 protein YPK_1977.